The primary structure comprises 367 residues: Ribosomal lysine N-methyltransferase 5 (367 aa).

Residues Trp110, 170–172, Asp192, Trp256, and Met288 each bind S-adenosyl-L-methionine; that span reads GAG.

Belongs to the class I-like SAM-binding methyltransferase superfamily. RKM5 family.

In terms of biological role, S-adenosyl-L-methionine-dependent protein-lysine N-methyltransferase that monomethylates 60S ribosomal protein L1 (RPL1A and RPL1B) at 'Lys-46'. The polypeptide is Ribosomal lysine N-methyltransferase 5 (RKM5) (Saccharomyces cerevisiae (strain JAY291) (Baker's yeast)).